The sequence spans 357 residues: MSCSYYGKCAGCNLNLPYNDEISFKTDFLKSEFKEFYQGEIEIFKSDEWNFRNHAEFGIWHEKGDVFYTMRGNSNERVKIETCPKMDKKIVEMMPKLLQNLRENKNLKERLFGIEFIATKFDFMAILLYHKDIFNIKDDLAKLAEILDIKISARSRGKFLNFGGEILREKVQNFIYRFNADAFFQSNTKVNEKMILFVLNAVKNGKDLLEMYCGHGNFTLPLASEFGKILANEISKNSIKNARENSKNKDNINFVRMSAKELIDAFNGVREFNRLKDIDITDFDFSHVLVDPPRAGIEPEVLDFIQNFKNIIYISCNPASLKQNLQILCETHKITKFALFDQFVHTEHIECGVVLQK.

S-adenosyl-L-methionine-binding residues include Q185, Y212, N217, E233, and D291. Catalysis depends on C316, which acts as the Nucleophile. E350 acts as the Proton acceptor in catalysis.

It belongs to the class I-like SAM-binding methyltransferase superfamily. RNA M5U methyltransferase family. TrmA subfamily.

It catalyses the reaction uridine(54) in tRNA + S-adenosyl-L-methionine = 5-methyluridine(54) in tRNA + S-adenosyl-L-homocysteine + H(+). It carries out the reaction uridine(341) in tmRNA + S-adenosyl-L-methionine = 5-methyluridine(341) in tmRNA + S-adenosyl-L-homocysteine + H(+). In terms of biological role, dual-specificity methyltransferase that catalyzes the formation of 5-methyluridine at position 54 (m5U54) in all tRNAs, and that of position 341 (m5U341) in tmRNA (transfer-mRNA). In Campylobacter hominis (strain ATCC BAA-381 / DSM 21671 / CCUG 45161 / LMG 19568 / NCTC 13146 / CH001A), this protein is tRNA/tmRNA (uracil-C(5))-methyltransferase.